A 234-amino-acid polypeptide reads, in one-letter code: tRNA (guanine-N(1)-)-methyltransferase (234 aa).

S-adenosyl-L-methionine-binding positions include Gly-112 and 132 to 137 (IGDFIL).

The protein belongs to the RNA methyltransferase TrmD family. Homodimer.

The protein localises to the cytoplasm. It carries out the reaction guanosine(37) in tRNA + S-adenosyl-L-methionine = N(1)-methylguanosine(37) in tRNA + S-adenosyl-L-homocysteine + H(+). Functionally, specifically methylates guanosine-37 in various tRNAs. The polypeptide is tRNA (guanine-N(1)-)-methyltransferase (Campylobacter jejuni subsp. doylei (strain ATCC BAA-1458 / RM4099 / 269.97)).